Consider the following 851-residue polypeptide: Receptor like protein kinase S.2 (851 aa).

Residues 117–436 form the Protein kinase 1 domain; sequence FSDELILGSG…LPSFKSHPLY (320 aa). Residues 123–131 and lysine 146 contribute to the ATP site; that span reads LGSGGFGRV. The Proton acceptor role is filled by aspartate 248. The tract at residues 448-471 is disordered; the sequence is SATTTTTRTTMTTTTSTTSFNASS. The region spanning 532-819 is the Protein kinase 2 domain; sequence FSDARRVAEV…SILDGSERFF (288 aa). ATP-binding positions include 538–546 and lysine 560; that span reads VAEVDFGTA.

The protein belongs to the protein kinase superfamily. Ser/Thr protein kinase family.

It carries out the reaction L-seryl-[protein] + ATP = O-phospho-L-seryl-[protein] + ADP + H(+). The catalysed reaction is L-threonyl-[protein] + ATP = O-phospho-L-threonyl-[protein] + ADP + H(+). This Arabidopsis thaliana (Mouse-ear cress) protein is Receptor like protein kinase S.2 (LECRKS2).